The primary structure comprises 85 residues: UPF0291 protein SSA_1878 (85 aa).

The disordered stretch occupies residues 58–85 (GNDVTPEKLRQVQREKGLHGRSLDDPES). A compositionally biased stretch (basic and acidic residues) spans 62–85 (TPEKLRQVQREKGLHGRSLDDPES).

The protein belongs to the UPF0291 family.

Its subcellular location is the cytoplasm. The sequence is that of UPF0291 protein SSA_1878 from Streptococcus sanguinis (strain SK36).